The primary structure comprises 370 residues: Dihydroorotate dehydrogenase (quinone) (370 aa).

Residues 67–71 and Thr91 each bind FMN; that span reads AGFDK. Position 71 (Lys71) interacts with substrate. A substrate-binding site is contributed by 116-120; the sequence is NRMGF. The FMN site is built by Asn146 and Asn179. Substrate is bound at residue Asn179. Ser182 acts as the Nucleophile in catalysis. Substrate is bound at residue Asn184. Lys222 and Thr250 together coordinate FMN. 251–252 contacts substrate; it reads NT. FMN-binding positions include Gly276, Gly305, and 326 to 327; that span reads YS.

The protein belongs to the dihydroorotate dehydrogenase family. Type 2 subfamily. In terms of assembly, monomer. FMN is required as a cofactor.

Its subcellular location is the cell membrane. The enzyme catalyses (S)-dihydroorotate + a quinone = orotate + a quinol. Its pathway is pyrimidine metabolism; UMP biosynthesis via de novo pathway; orotate from (S)-dihydroorotate (quinone route): step 1/1. In terms of biological role, catalyzes the conversion of dihydroorotate to orotate with quinone as electron acceptor. This is Dihydroorotate dehydrogenase (quinone) from Streptomyces griseus subsp. griseus (strain JCM 4626 / CBS 651.72 / NBRC 13350 / KCC S-0626 / ISP 5235).